An 860-amino-acid chain; its full sequence is Ubiquitin carboxyl-terminal hydrolase 13 (860 aa).

A UBP-type; degenerate zinc finger spans residues 168-276; it reads QVSRHARSLR…EHLLHFGIDM (109 aa). 4 residues coordinate Zn(2+): Cys192, Cys195, Cys212, and His225. A USP domain is found at 318 to 857; that stretch reads TGIKNLGNSC…LGYMYFYRRL (540 aa). Cys327 (nucleophile) is an active-site residue. The tract at residues 611–636 is disordered; it reads DLTPPIVIPEDTRDSSTNNSLESPEI. UBA domains lie at 635–676 and 710–750; these read EIDE…IIAH and QPPE…IFTH. The segment covering 755 to 768 has biased composition (acidic residues); it reads DESEAMSDTADTEP. The segment at 755–795 is disordered; it reads DESEAMSDTADTEPNDNSFSNANAHTDSSLSPDQDLSSPRV. The span at 769-780 shows a compositional bias: polar residues; it reads NDNSFSNANAHT. The span at 781–793 shows a compositional bias: low complexity; that stretch reads DSSLSPDQDLSSP. His819 serves as the catalytic Proton acceptor.

The protein belongs to the peptidase C19 family.

The catalysed reaction is Thiol-dependent hydrolysis of ester, thioester, amide, peptide and isopeptide bonds formed by the C-terminal Gly of ubiquitin (a 76-residue protein attached to proteins as an intracellular targeting signal).. Specifically inhibited by spautin-1 (specific and potent autophagy inhibitor-1), a derivative of MBCQ that binds to usp13 and inhibits deubiquitinase activity. Deubiquitinase that mediates deubiquitination of target proteins and is involved in various processes such as autophagy and endoplasmic reticulum-associated degradation (ERAD). This is Ubiquitin carboxyl-terminal hydrolase 13 (usp13) from Danio rerio (Zebrafish).